A 434-amino-acid chain; its full sequence is MFIDRAKIYVKAGDGGNGCIAFRREKFVPKGGPAGGDGGKGGDVIIEADENLDTLLDFHYKRHYYAERGEHGKGKNQKGKDGKDLVIKVPVGTLIFDVETGELLADLVSHGQRVVVAKGGKGGRGNAHFATSTRQTPYFAEKGEKGEERWLYLELKLLADVGLLGLPNAGKSTLLSRISNATPEIAPYPFTTKTPNLGVVEREDITFTVADIPGLIEGAHENKGMGDEFLRHIERTSVLVFVLDAADMVNPPQRAYEILKKELYLYSPKLLEKPRIIAINKIDLPEAQERIPEIEEWLKNEGVPYVFISAKEGINIDKLLELMEKYVKEKKESIPVVEIEKEIEELKQENKKQEIPEIIKEGDLWILKDKKTESLANKLDLYNPQAFSYFLNYAKRRGIIKLINRAKIKDDEEIKIGNYVFKYNSKNNSLELIE.

The 158-residue stretch at 1–158 (MFIDRAKIYV…RWLYLELKLL (158 aa)) folds into the Obg domain. One can recognise an OBG-type G domain in the interval 159–328 (ADVGLLGLPN…LLELMEKYVK (170 aa)). GTP-binding positions include 165-172 (GLPNAGKS), 190-194 (FTTKT), 211-214 (DIPG), 280-283 (NKID), and 309-311 (SAK). Residues Ser-172 and Thr-192 each coordinate Mg(2+). The 79-residue stretch at 347-425 (KQENKKQEIP…IGNYVFKYNS (79 aa)) folds into the OCT domain.

It belongs to the TRAFAC class OBG-HflX-like GTPase superfamily. OBG GTPase family. Monomer. The cofactor is Mg(2+).

The protein resides in the cytoplasm. An essential GTPase which binds GTP, GDP and possibly (p)ppGpp with moderate affinity, with high nucleotide exchange rates and a fairly low GTP hydrolysis rate. Plays a role in control of the cell cycle, stress response, ribosome biogenesis and in those bacteria that undergo differentiation, in morphogenesis control. This is GTPase Obg from Dictyoglomus turgidum (strain DSM 6724 / Z-1310).